A 357-amino-acid polypeptide reads, in one-letter code: MSQSGKNGLTYSDAGVDIDAGNLLVEKIKPAVRSTRRPGADGEIGGFGGLFDLKAAGFNDPVLVAANDGVGTKLKIAIDADYHDTVGIDLVAMCVNDLVVQGAEPLFFLDYFATGKLDPDQGAAIVGGIAAGCRQAGCALIGGETAEMPGMYSSGDYDLAGFAVGAAERGKLLPSGDIAEGDVILGLASSGVHSNGFSLVRKIVELSGLGWDAPAPFASDKKLGEALLEPTRIYVKPLLKAIRETGAIKALAHITGGGFPENIPRVLPKHLAAEIDLAAVKAPPVFSWLARTGGVETKEMLRTFNCGVGMIAVVASENVAAVSAALEAEGETVVTLGRMIARDEGAAGTVYQGTLAL.

It belongs to the AIR synthase family.

The protein resides in the cytoplasm. The enzyme catalyses 2-formamido-N(1)-(5-O-phospho-beta-D-ribosyl)acetamidine + ATP = 5-amino-1-(5-phospho-beta-D-ribosyl)imidazole + ADP + phosphate + H(+). The protein operates within purine metabolism; IMP biosynthesis via de novo pathway; 5-amino-1-(5-phospho-D-ribosyl)imidazole from N(2)-formyl-N(1)-(5-phospho-D-ribosyl)glycinamide: step 2/2. The chain is Phosphoribosylformylglycinamidine cyclo-ligase from Rhizobium leguminosarum bv. trifolii (strain WSM2304).